Reading from the N-terminus, the 296-residue chain is Glycine N-acyltransferase (296 aa).

Position 16 is an N6-acetyllysine; alternate (lysine 16). Position 16 is an N6-succinyllysine; alternate (lysine 16). Lysine 113 is subject to N6-acetyllysine. 3 positions are modified to N6-acetyllysine; alternate: lysine 127, lysine 141, and lysine 142. An N6-succinyllysine; alternate mark is found at lysine 127, lysine 141, and lysine 142. N6-acetyllysine occurs at positions 159 and 167. An N6-succinyllysine modification is found at lysine 169. 2 positions are modified to N6-acetyllysine; alternate: lysine 183 and lysine 256. An N6-succinyllysine; alternate mark is found at lysine 183 and lysine 256. The residue at position 267 (lysine 267) is an N6-succinyllysine.

The protein belongs to the glycine N-acyltransferase family.

The protein resides in the mitochondrion. It carries out the reaction an acyl-CoA + glycine = an N-acylglycine + CoA + H(+). The enzyme catalyses benzoyl-CoA + glycine = N-benzoylglycine + CoA + H(+). Functionally, mitochondrial acyltransferase which transfers an acyl group to the N-terminus of glycine and glutamine, although much less efficiently. Can conjugate a multitude of substrates to form a variety of N-acylglycines, thereby detoxify xenobiotics, such as benzoic acid or salicylic acid, and endogenous organic acids, such as isovaleric acid. The polypeptide is Glycine N-acyltransferase (Glyat) (Mus musculus (Mouse)).